An 811-amino-acid chain; its full sequence is Auxin response factor 8 (811 aa).

Positions 126-228 form a DNA-binding region, TF-B3; that stretch reads FCKTLTASDT…QLFLGIRHAT (103 aa). 2 disordered regions span residues 467-496 and 544-565; these read HQYL…HLMH and HLQQ…SDFT. 2 stretches are compositionally biased toward polar residues: residues 469–482 and 544–555; these read YLQQ…DLML and HLQQWQQQSEMP. The 85-residue stretch at 705–789 folds into the PB1 domain; sequence KNFVKVYKSG…WYIKILSPED (85 aa).

The protein belongs to the ARF family. In terms of assembly, homodimers and heterodimers. As to expression, expressed in the whole plant.

It is found in the nucleus. Its function is as follows. Auxin response factors (ARFs) are transcriptional factors that bind specifically to the DNA sequence 5'-TGTCTC-3' found in the auxin-responsive promoter elements (AuxREs). Seems to act as transcriptional activator. Formation of heterodimers with Aux/IAA proteins may alter their ability to modulate early auxin response genes expression. Regulates both stamen and gynoecium maturation. Promotes jasmonic acid production. Partially redundant with ARF6. Involved in fruit initiation. Acts as an inhibitor to stop further carpel development in the absence of fertilization and the generation of signals required to initiate fruit and seed development. The sequence is that of Auxin response factor 8 (ARF8) from Arabidopsis thaliana (Mouse-ear cress).